Here is a 555-residue protein sequence, read N- to C-terminus: Adenine deaminase (555 aa).

It belongs to the metallo-dependent hydrolases superfamily. Adenine deaminase family. Requires Mn(2+) as cofactor.

The enzyme catalyses adenine + H2O + H(+) = hypoxanthine + NH4(+). The chain is Adenine deaminase from Methanosarcina mazei (strain ATCC BAA-159 / DSM 3647 / Goe1 / Go1 / JCM 11833 / OCM 88) (Methanosarcina frisia).